A 469-amino-acid chain; its full sequence is UDP-N-acetylmuramate--L-alanine ligase (469 aa).

120–126 lines the ATP pocket; it reads GTHGKTT.

The protein belongs to the MurCDEF family.

The protein resides in the cytoplasm. The enzyme catalyses UDP-N-acetyl-alpha-D-muramate + L-alanine + ATP = UDP-N-acetyl-alpha-D-muramoyl-L-alanine + ADP + phosphate + H(+). The protein operates within cell wall biogenesis; peptidoglycan biosynthesis. Its function is as follows. Cell wall formation. The polypeptide is UDP-N-acetylmuramate--L-alanine ligase (Acetivibrio thermocellus (strain ATCC 27405 / DSM 1237 / JCM 9322 / NBRC 103400 / NCIMB 10682 / NRRL B-4536 / VPI 7372) (Clostridium thermocellum)).